Consider the following 149-residue polypeptide: Stathmin (149 aa).

At alanine 2 the chain carries N-acetylalanine. Serine 4 is subject to Phosphoserine. The 142-residue stretch at 4 to 145 folds into the SLD domain; the sequence is SDIQVKELEK…NKESKDPADE (142 aa). Lysine 9 is modified (N6-acetyllysine). Serine 16 carries the post-translational modification Phosphoserine. Serine 25 bears the Phosphoserine; by CDK1, MAPK1 and MAPK3 mark. The residue at position 29 (lysine 29) is an N6-methyllysine. Serine 31 carries the phosphoserine modification. Position 38 is a phosphoserine; by CDK1, MAPK1 and MAPK3 (serine 38). A coiled-coil region spans residues 41–140; it reads KKKDLSLEEI…EEVRKNKESK (100 aa). At serine 63 the chain carries Phosphoserine; by PKA. Residues lysine 100 and lysine 119 each carry the N6-acetyllysine modification. Basic and acidic residues predominate over residues 121–143; the sequence is ERLREKDKHIEEVRKNKESKDPA. Residues 121-149 are disordered; it reads ERLREKDKHIEEVRKNKESKDPADETEAD.

This sequence belongs to the stathmin family. In terms of assembly, binds to two alpha/beta-tubulin heterodimers. Interacts with KIST. In terms of processing, many different phosphorylated forms are observed depending on specific combinations among the sites which can be phosphorylated. MAPK is responsible for the phosphorylation of stathmin in response to NGF. Phosphorylation at Ser-16 seems to be required for neuron polarization.

The protein resides in the cytoplasm. It localises to the cytoskeleton. Its function is as follows. Involved in the regulation of the microtubule (MT) filament system by destabilizing microtubules. Prevents assembly and promotes disassembly of microtubules. Its phosphorylation at Ser-16 may be required for axon formation during neurogenesis. Involved in the control of the learned and innate fear. The polypeptide is Stathmin (STMN1) (Bos taurus (Bovine)).